The following is a 519-amino-acid chain: Aldehyde dehydrogenase X, mitochondrial (519 aa).

Residues 1–19 constitute a mitochondrion transit peptide; it reads MLNARFLVPRLLCLQGRTT. At K53 the chain carries N6-acetyllysine. The residue at position 54 (K54) is an N6-acetyllysine; alternate. Residue K54 is modified to N6-succinyllysine; alternate. 264-269 contacts NAD(+); the sequence is GSTEVG. Catalysis depends on E287, which acts as the Proton acceptor. C321 (nucleophile) is an active-site residue. N6-acetyllysine; alternate occurs at positions 366, 385, 401, and 428. N6-succinyllysine; alternate occurs at positions 366, 385, 401, and 428. K431 is subject to N6-acetyllysine.

This sequence belongs to the aldehyde dehydrogenase family. As to quaternary structure, homotetramer.

The protein localises to the mitochondrion matrix. The catalysed reaction is an aldehyde + NAD(+) + H2O = a carboxylate + NADH + 2 H(+). It participates in alcohol metabolism; ethanol degradation; acetate from ethanol: step 2/2. ALDHs play a major role in the detoxification of alcohol-derived acetaldehyde. They are involved in the metabolism of corticosteroids, biogenic amines, neurotransmitters, and lipid peroxidation. The chain is Aldehyde dehydrogenase X, mitochondrial (Aldh1b1) from Rattus norvegicus (Rat).